A 156-amino-acid chain; its full sequence is Transcriptional repressor NrdR (156 aa).

A zinc finger lies at Cys-3–Cys-34. The ATP-cone domain maps to Val-49–Gln-139.

Belongs to the NrdR family. Zn(2+) serves as cofactor.

In terms of biological role, negatively regulates transcription of bacterial ribonucleotide reductase nrd genes and operons by binding to NrdR-boxes. In Thermotoga neapolitana (strain ATCC 49049 / DSM 4359 / NBRC 107923 / NS-E), this protein is Transcriptional repressor NrdR.